The sequence spans 303 residues: Beta-lactamase L2 (303 aa).

The segment at residues 1 to 35 (MLARRRFLQFSGAAVASSLALPLLARAAGKTAASA) is a signal peptide (tat-type signal). Residue Ser-83 is the Acyl-ester intermediate of the active site. Position 247 to 249 (247 to 249 (KTG)) interacts with substrate.

This sequence belongs to the class-A beta-lactamase family. Predicted to be exported by the Tat system. The position of the signal peptide cleavage has not been experimentally proven.

It catalyses the reaction a beta-lactam + H2O = a substituted beta-amino acid. This is Beta-lactamase L2 from Stenotrophomonas maltophilia (Pseudomonas maltophilia).